Consider the following 360-residue polypeptide: GTPase Obg (360 aa).

Positions 1 to 156 (MFVDSVEIII…KCVRLELKLI (156 aa)) constitute an Obg domain. The OBG-type G domain maps to 157–360 (ADIGLVGFPN…LKFVLLEALP (204 aa)). GTP is bound by residues 163–170 (GFPNAGKS), 188–192 (FTTLV), 210–213 (DIPG), 279–282 (NKCD), and 341–343 (SAV). Mg(2+) is bound by residues serine 170 and threonine 190.

This sequence belongs to the TRAFAC class OBG-HflX-like GTPase superfamily. OBG GTPase family. Monomer. Mg(2+) is required as a cofactor.

Its subcellular location is the cytoplasm. Its function is as follows. An essential GTPase which binds GTP, GDP and possibly (p)ppGpp with moderate affinity, with high nucleotide exchange rates and a fairly low GTP hydrolysis rate. Plays a role in control of the cell cycle, stress response, ribosome biogenesis and in those bacteria that undergo differentiation, in morphogenesis control. The polypeptide is GTPase Obg (Helicobacter pylori (strain ATCC 700392 / 26695) (Campylobacter pylori)).